A 272-amino-acid polypeptide reads, in one-letter code: HTH-type transcriptional repressor AllR (272 aa).

Residues 1 to 20 (MTEVRRRGRPGQAEPTAQKG) are disordered. Residues 21 to 83 (AQALERGIAI…SQLGWWHIGL (63 aa)) form the HTH iclR-type domain. The H-T-H motif DNA-binding region spans 43–62 (VSDISGSLDLPLSTTFRLLK). In terms of domain architecture, IclR-ED spans 98–267 (VLSVAGPFMH…AKDISTALGL (170 aa)). Glyoxylate is bound by residues 154 to 156 (SGA), D207, C217, and 234 to 236 (SIS).

In terms of biological role, negative regulator of allantoin and glyoxylate utilization operons. Binds to the gcl promoter and to the allS-allA intergenic region. The chain is HTH-type transcriptional repressor AllR (allR) from Salmonella typhi.